Reading from the N-terminus, the 356-residue chain is Cyanide hydratase (356 aa).

In terms of domain architecture, CN hydrolase spans 15-290; sequence FKVAAVQAEP…EVVLYANISL (276 aa). The active-site Proton acceptor is Glu-55. The active site involves Lys-137. The active-site Nucleophile is Cys-172. The interval 331–356 is disordered; that stretch reads DEQAASKAQQAEIDNAGKGSIVPSKL.

It belongs to the carbon-nitrogen hydrolase superfamily. Nitrilase family.

It carries out the reaction formamide = hydrogen cyanide + H2O. Catalyzes the hydration of cyanide to formamide. Degradation of cyanide may be important for plant pathogenic fungi in infection of cyanogenic plants. The polypeptide is Cyanide hydratase (Armillaria gallica (Bulbous honey fungus)).